A 571-amino-acid chain; its full sequence is Cationic amino acid transporter 8 (571 aa).

The N-linked (GlcNAc...) asparagine glycan is linked to N35. The next 6 membrane-spanning stretches (helical) occupy residues 39-59 (FWLLVIIVIYTATSACIYFDW), 94-114 (SLYPITLAIHFTMSVFCGFLY), 117-137 (IGPKFTAIIGQMCNIMSWVFL), 148-168 (FLSFVFLGLGADTAFIPILTI), 177-197 (TFILTVVGAAASLSYAVPATL), and 217-237 (IFLILVPCLLVATFLLPLMPF). 3 N-linked (GlcNAc...) asparagine glycosylation sites follow: N298, N325, and N346. A helical transmembrane segment spans residues 365–385 (LFFKVLLSYPSICIIVYFILF). A glycan (N-linked (GlcNAc...) asparagine) is linked at N386. Transmembrane regions (helical) follow at residues 405–425 (SIINIINILMPISCIPCIIFG), 433–453 (SAIIIILMNAFSALMHLTALI), 461–481 (VSAFLYMCVTSIYTSQIYCFI), 488–508 (VVFGKLLGFASLCGGLFSLLC), and 528–548 (VVLLLVIAFILMFLPLTVLYF).

It belongs to the SLC43A transporter (TC 2.A.1.44) family.

The protein resides in the membrane. The enzyme catalyses L-arginine(in) = L-arginine(out). In terms of biological role, sodium-independent cationic amino acid transporter. Transports L-arginine, L-lysine, L-histidine and L-ornithine. This is Cationic amino acid transporter 8 from Plasmodium vivax (strain Salvador I).